Consider the following 183-residue polypeptide: ATP synthase subunit b, chloroplastic (183 aa).

A helical transmembrane segment spans residues 27 to 49; the sequence is LATNLINLTVVVGVLIYFGKGVL.

It belongs to the ATPase B chain family. As to quaternary structure, F-type ATPases have 2 components, F(1) - the catalytic core - and F(0) - the membrane proton channel. F(1) has five subunits: alpha(3), beta(3), gamma(1), delta(1), epsilon(1). F(0) has four main subunits: a(1), b(1), b'(1) and c(10-14). The alpha and beta chains form an alternating ring which encloses part of the gamma chain. F(1) is attached to F(0) by a central stalk formed by the gamma and epsilon chains, while a peripheral stalk is formed by the delta, b and b' chains.

The protein localises to the plastid. The protein resides in the chloroplast thylakoid membrane. Functionally, f(1)F(0) ATP synthase produces ATP from ADP in the presence of a proton or sodium gradient. F-type ATPases consist of two structural domains, F(1) containing the extramembraneous catalytic core and F(0) containing the membrane proton channel, linked together by a central stalk and a peripheral stalk. During catalysis, ATP synthesis in the catalytic domain of F(1) is coupled via a rotary mechanism of the central stalk subunits to proton translocation. Its function is as follows. Component of the F(0) channel, it forms part of the peripheral stalk, linking F(1) to F(0). In Oryza nivara (Indian wild rice), this protein is ATP synthase subunit b, chloroplastic.